We begin with the raw amino-acid sequence, 37 residues long: Large ribosomal subunit protein bL36 (37 aa).

Belongs to the bacterial ribosomal protein bL36 family.

This chain is Large ribosomal subunit protein bL36, found in Bifidobacterium adolescentis (strain ATCC 15703 / DSM 20083 / NCTC 11814 / E194a).